The primary structure comprises 233 residues: Phosphoribosylformylglycinamidine synthase subunit PurQ (233 aa).

Positions 3-233 (SAVLVFPGIN…GLAQHLAKAA (231 aa)) constitute a Glutamine amidotransferase type-1 domain. The Nucleophile role is filled by Cys87. Active-site residues include His204 and Glu206.

In terms of assembly, part of the FGAM synthase complex composed of 1 PurL, 1 PurQ and 2 PurS subunits.

It localises to the cytoplasm. The enzyme catalyses N(2)-formyl-N(1)-(5-phospho-beta-D-ribosyl)glycinamide + L-glutamine + ATP + H2O = 2-formamido-N(1)-(5-O-phospho-beta-D-ribosyl)acetamidine + L-glutamate + ADP + phosphate + H(+). It carries out the reaction L-glutamine + H2O = L-glutamate + NH4(+). It participates in purine metabolism; IMP biosynthesis via de novo pathway; 5-amino-1-(5-phospho-D-ribosyl)imidazole from N(2)-formyl-N(1)-(5-phospho-D-ribosyl)glycinamide: step 1/2. Functionally, part of the phosphoribosylformylglycinamidine synthase complex involved in the purines biosynthetic pathway. Catalyzes the ATP-dependent conversion of formylglycinamide ribonucleotide (FGAR) and glutamine to yield formylglycinamidine ribonucleotide (FGAM) and glutamate. The FGAM synthase complex is composed of three subunits. PurQ produces an ammonia molecule by converting glutamine to glutamate. PurL transfers the ammonia molecule to FGAR to form FGAM in an ATP-dependent manner. PurS interacts with PurQ and PurL and is thought to assist in the transfer of the ammonia molecule from PurQ to PurL. This chain is Phosphoribosylformylglycinamidine synthase subunit PurQ, found in Rhodopseudomonas palustris (strain ATCC BAA-98 / CGA009).